A 252-amino-acid polypeptide reads, in one-letter code: Pantothenate synthetase (252 aa).

Met-29–His-36 serves as a coordination point for ATP. The Proton donor role is filled by His-36. Gln-60 contributes to the (R)-pantoate binding site. Gln-60 serves as a coordination point for beta-alanine. Gly-146–Asp-149 lines the ATP pocket. Gln-152 contributes to the (R)-pantoate binding site. Residues Val-175 and Cys-183–Arg-186 contribute to the ATP site.

It belongs to the pantothenate synthetase family. Homodimer.

The protein resides in the cytoplasm. It carries out the reaction (R)-pantoate + beta-alanine + ATP = (R)-pantothenate + AMP + diphosphate + H(+). It participates in cofactor biosynthesis; (R)-pantothenate biosynthesis; (R)-pantothenate from (R)-pantoate and beta-alanine: step 1/1. In terms of biological role, catalyzes the condensation of pantoate with beta-alanine in an ATP-dependent reaction via a pantoyl-adenylate intermediate. This chain is Pantothenate synthetase, found in Legionella pneumophila subsp. pneumophila (strain Philadelphia 1 / ATCC 33152 / DSM 7513).